We begin with the raw amino-acid sequence, 536 residues long: MELSSPSREEYPMPRGRVGIMAASLMGLLLLHTVSWVSGARPCSPKSFGYSSVVCVCNGTYCDSLDPLTLPDPGTFSRFESTRSGRRMELSLGTIQANRTGTGLLLTLQPDQKFQKVKGFGGAMTDAAALNILALSPAARNLLLKSYFSEEGIEYNIIRVPMASCDFSIRTYTYDDSPDDFQLLNFSLPEEDVKLKIPLIHQALELANRSVSLFASPWTSPTWLKTNGAVNGKGTLKGQAGDLYHKTWARYFVKFLDAYAEHKLRFWAVTAENEPTAGLLTGYPFQCLGFTPEHQRDFIARDLGPILANSTHRDVRLLMLDDQRLLLPRWAQVVLADPEAAKYVHGIAVHWYLDFLAPAKATLGETHRLFPNTMLFASEACVGSKFWEQSVRLGSWDRGMRYSHSIITNLLYHVVGWTDWNLALNPEGGPNWVRNFVDSPIIVDIAKDTFYKQPMFYHLGHFSKFIPEGSQRVGLVASKKSDLDTVALLRPDGSAVAVVLNRSSKDVPLTIKDPAVGFMETVSPGYSIHTYLWRRQ.

The signal sequence occupies residues 1-39; the sequence is MELSSPSREEYPMPRGRVGIMAASLMGLLLLHTVSWVSG. Disulfide bonds link Cys43/Cys55 and Cys57/Cys62. N-linked (GlcNAc...) asparagine glycosylation is found at Asn58, Asn98, Asn185, and Asn208. Residue Glu274 is the Proton donor of the active site. Asn309 carries an N-linked (GlcNAc...) asparagine glycan. Glu379 (nucleophile) is an active-site residue. Residue Asn501 is glycosylated (N-linked (GlcNAc...) asparagine).

This sequence belongs to the glycosyl hydrolase 30 family. Interacts with saposin-C. Interacts with SCARB2. Interacts with TCP1. Interacts with GRN; this interaction prevents aggregation of GBA1-SCARB2 complex via interaction with HSPA1A upon stress.

The protein resides in the lysosome membrane. The enzyme catalyses a beta-D-glucosyl-(1&lt;-&gt;1')-N-acylsphing-4-enine + H2O = an N-acylsphing-4-enine + D-glucose. It carries out the reaction a beta-D-galactosyl-(1&lt;-&gt;1')-N-acylsphing-4-enine + H2O = an N-acylsphing-4-enine + D-galactose. The catalysed reaction is cholesteryl 3-beta-D-glucoside + H2O = cholesterol + D-glucose. It catalyses the reaction a beta-D-glucosyl-(1&lt;-&gt;1')-N-acylsphing-4-enine + cholesterol = cholesteryl 3-beta-D-glucoside + an N-acylsphing-4-enine. The enzyme catalyses beta-D-glucosyl-N-(9Z-octadecenoyl)-sphing-4E-enine + cholesterol = N-(9Z-octadecenoyl)-sphing-4-enine + cholesteryl 3-beta-D-glucoside. It carries out the reaction beta-D-glucosyl-N-octanoylsphing-4E-enine + cholesterol = N-octanoylsphing-4-enine + cholesteryl 3-beta-D-glucoside. The catalysed reaction is beta-D-glucosyl-N-dodecanoylsphing-4-enine + cholesterol = N-dodecanoylsphing-4-enine + cholesteryl 3-beta-D-glucoside. It catalyses the reaction beta-D-glucosyl-(1&lt;-&gt;1)-N-octadecanoylsphing-4-enine + cholesterol = N-octadecanoylsphing-4-enine + cholesteryl 3-beta-D-glucoside. The enzyme catalyses beta-D-glucosyl-(1&lt;-&gt;1')-N-(15Z-tetracosenoyl)-sphing-4-enine + cholesterol = N-(15Z-tetracosenoyl)-sphing-4-enine + cholesteryl 3-beta-D-glucoside. It carries out the reaction a beta-D-galactosyl-(1&lt;-&gt;1')-N-acylsphing-4-enine + cholesterol = cholesteryl 3-beta-D-galactoside + an N-acylsphing-4-enine. The catalysed reaction is 1-(beta-D-galactosyl)-N-dodecanoylsphing-4-enine + cholesterol = cholesteryl 3-beta-D-galactoside + N-dodecanoylsphing-4-enine. It catalyses the reaction a beta-D-xylosyl-(1&lt;-&gt;1')-N-acylsphing-4-enine + cholesterol = cholesteryl 3-beta-D-xyloside + an N-acylsphing-4-enine. The enzyme catalyses beta-D-xylosyl-(1&lt;-&gt;1')-N-(9Z-octadecenoyl)-sphing-4-enine + cholesterol = cholesteryl 3-beta-D-xyloside + N-(9Z-octadecenoyl)-sphing-4-enine. It participates in steroid metabolism; cholesterol metabolism. It functions in the pathway sphingolipid metabolism. In terms of biological role, glucosylceramidase that catalyzes, within the lysosomal compartment, the hydrolysis of glucosylceramides/GlcCers (such as beta-D-glucosyl-(1&lt;-&gt;1')-N-acylsphing-4-enine) into free ceramides (such as N-acylsphing-4-enine) and glucose. Plays a central role in the degradation of complex lipids and the turnover of cellular membranes. Through the production of ceramides, participates in the PKC-activated salvage pathway of ceramide formation. Catalyzes the glucosylation of cholesterol, through a transglucosylation reaction where glucose is transferred from GlcCer to cholesterol. GlcCer containing mono-unsaturated fatty acids (such as beta-D-glucosyl-N-(9Z-octadecenoyl)-sphing-4-enine) are preferred as glucose donors for cholesterol glucosylation when compared with GlcCer containing same chain length of saturated fatty acids (such as beta-D-glucosyl-N-octadecanoyl-sphing-4-enine). Under specific conditions, may alternatively catalyze the reverse reaction, transferring glucose from cholesteryl 3-beta-D-glucoside to ceramide. Can also hydrolyze cholesteryl 3-beta-D-glucoside producing glucose and cholesterol. Catalyzes the hydrolysis of galactosylceramides/GalCers (such as beta-D-galactosyl-(1&lt;-&gt;1')-N-acylsphing-4-enine), as well as the transfer of galactose between GalCers and cholesterol in vitro, but with lower activity than with GlcCers. Contrary to GlcCer and GalCer, xylosylceramide/XylCer (such as beta-D-xyosyl-(1&lt;-&gt;1')-N-acylsphing-4-enine) is not a good substrate for hydrolysis, however it is a good xylose donor for transxylosylation activity to form cholesteryl 3-beta-D-xyloside. This Bos taurus (Bovine) protein is Lysosomal acid glucosylceramidase (GBA1).